The following is a 1116-amino-acid chain: Surface layer protein (1116 aa).

The N-terminal stretch at M1–A53 is a signal peptide. 3 SLH domains span residues A54–Q117, F118–W181, and P182–D231.

Its subcellular location is the secreted. The protein localises to the cell wall. It localises to the S-layer. This chain is Surface layer protein, found in Brevibacillus choshinensis.